Reading from the N-terminus, the 514-residue chain is ATP synthase subunit alpha (514 aa).

ATP is bound at residue 170–177; it reads GDRQIGKT.

It belongs to the ATPase alpha/beta chains family. As to quaternary structure, F-type ATPases have 2 components, CF(1) - the catalytic core - and CF(0) - the membrane proton channel. CF(1) has five subunits: alpha(3), beta(3), gamma(1), delta(1), epsilon(1). CF(0) has three main subunits: a(1), b(2) and c(9-12). The alpha and beta chains form an alternating ring which encloses part of the gamma chain. CF(1) is attached to CF(0) by a central stalk formed by the gamma and epsilon chains, while a peripheral stalk is formed by the delta and b chains.

It localises to the cell inner membrane. The catalysed reaction is ATP + H2O + 4 H(+)(in) = ADP + phosphate + 5 H(+)(out). Functionally, produces ATP from ADP in the presence of a proton gradient across the membrane. The alpha chain is a regulatory subunit. This Pseudomonas putida (strain ATCC 47054 / DSM 6125 / CFBP 8728 / NCIMB 11950 / KT2440) protein is ATP synthase subunit alpha.